Consider the following 601-residue polypeptide: Deuterosome assembly protein 1 (601 aa).

Coiled-coil stretches lie at residues 14 to 59 (CEAE…NAQT), 86 to 196 (TQNY…GKKQ), and 226 to 277 (IEKL…ELQS). The tract at residues 305-329 (AQDNRKRVESSYSPSPKEAERKRKE) is disordered. Positions 354-397 (EEGLCSEQERLRSEISELTQELHQKEVTIATVMKKAALLERQLK) form a coiled coil. Ser544 is subject to Phosphoserine. Positions 555–586 (AAQHFLMEEERRAKELEKLLNTHIDELQRHTE) form a coiled coil.

This sequence belongs to the CEP63 family. As to quaternary structure, interacts with CEP152; the interaction is mutually exclusive with CEP63. As to expression, highly enriched in multicilia-abundant tissues (trachea and oviduct).

The protein resides in the cytoplasm. In terms of biological role, key structural component of the deuterosome, a structure that promotes de novo centriole amplification in multiciliated cells. Deuterosome-mediated centriole amplification occurs in terminally differentiated multiciliated cells and can generate more than 100 centrioles. Probably sufficient for the specification and formation of the deuterosome inner core. Interacts with CEP152 and recruits PLK4 to activate centriole biogenesis. The chain is Deuterosome assembly protein 1 from Mus musculus (Mouse).